An 82-amino-acid polypeptide reads, in one-letter code: Small ribosomal subunit protein eS27B (82 aa).

The segment at 37–59 (CPGCLNITTVFSHAQTAVTCESC) adopts a C4-type zinc-finger fold.

Belongs to the eukaryotic ribosomal protein eS27 family. Component of the small ribosomal subunit (SSU). Mature yeast ribosomes consist of a small (40S) and a large (60S) subunit. The 40S small subunit contains 1 molecule of ribosomal RNA (18S rRNA) and 33 different proteins (encoded by 57 genes). The large 60S subunit contains 3 rRNA molecules (25S, 5.8S and 5S rRNA) and 46 different proteins (encoded by 81 genes). Zn(2+) is required as a cofactor. In terms of processing, the N-terminus is not modified.

It is found in the cytoplasm. Functionally, component of the ribosome, a large ribonucleoprotein complex responsible for the synthesis of proteins in the cell. The small ribosomal subunit (SSU) binds messenger RNAs (mRNAs) and translates the encoded message by selecting cognate aminoacyl-transfer RNA (tRNA) molecules. The large subunit (LSU) contains the ribosomal catalytic site termed the peptidyl transferase center (PTC), which catalyzes the formation of peptide bonds, thereby polymerizing the amino acids delivered by tRNAs into a polypeptide chain. The nascent polypeptides leave the ribosome through a tunnel in the LSU and interact with protein factors that function in enzymatic processing, targeting, and the membrane insertion of nascent chains at the exit of the ribosomal tunnel. This is Small ribosomal subunit protein eS27B from Saccharomyces cerevisiae (strain ATCC 204508 / S288c) (Baker's yeast).